The chain runs to 359 residues: 4-galactosyl-N-acetylglucosaminide 3-alpha-L-fucosyltransferase FUT6 (359 aa).

Residues 1–14 (MDPLGPAKPQWSWR) are Cytoplasmic-facing. Residues 15–34 (CCLTTLLFQLLMAVCFFSYL) form a helical; Signal-anchor for type II membrane protein membrane-spanning segment. Residues 35–359 (RVSQDDPTVY…QTRGIAAWFT (325 aa)) are Lumenal-facing. Residues asparagine 46, asparagine 91, asparagine 153, and asparagine 184 are each glycosylated (N-linked (GlcNAc...) asparagine). The tract at residues 73–112 (KPIALPRCSEMVPGTADCNITADRKVYPQADAVIVHHREV) is determines site-specific fucosylation.

The protein belongs to the glycosyltransferase 10 family. In terms of assembly, homodimer and monomer. Monomer (secreted form). Post-translationally, N-glycosylated. Proteolytic cleavage releases a secreted glycoform of 43 kDa. As to expression, kidney, liver, colon, small intestine, bladder, uterus and salivary gland.

It localises to the golgi apparatus. It is found in the golgi stack membrane. Its subcellular location is the secreted. It catalyses the reaction a beta-D-galactosyl-(1-&gt;4)-N-acetyl-beta-D-glucosaminyl derivative + GDP-beta-L-fucose = a beta-D-galactosyl-(1-&gt;4)-[alpha-L-fucosyl-(1-&gt;3)]-N-acetyl-beta-D-glucosaminyl derivative + GDP + H(+). It carries out the reaction an N-acetyl-alpha-neuraminyl-(2-&gt;3)-beta-D-galactosyl-(1-&gt;4)-N-acetyl-beta-D-glucosaminyl derivative + GDP-beta-L-fucose = an alpha-Neu5Ac-(2-&gt;3)-beta-D-Gal-(1-&gt;4)-[alpha-L-Fuc-(1-&gt;3)]-beta-D-GlcNAc derivative + GDP + H(+). The enzyme catalyses an alpha-Neu5Ac-(2-&gt;3)-beta-D-Gal-(1-&gt;4)-beta-D-GlcNAc-(1-&gt;3)-beta-D-Gal-(1-&gt;4)-[alpha-L-Fuc-(1-&gt;3)]-beta-D-GlcNAc derivative + GDP-beta-L-fucose = an alpha-Neu5Ac-(2-&gt;3)-beta-D-Gal-(1-&gt;4)-[alpha-L-Fuc-(1-&gt;3)]-beta-D-GlcNAc-(1-&gt;3)-beta-D-Gal-(1-&gt;4)-[alpha-L-Fuc-(1-&gt;3)]-beta-D-GlcNAc derivative + GDP + H(+). The catalysed reaction is a neolactoside nLc6Cer + GDP-beta-L-fucose = beta-D-Gal-(1-&gt;4)-[alpha-L-Fuc-(1-&gt;3)]-beta-D-GlcNAc-(1-&gt;3)-beta-D-Gal-(1-&gt;4)-beta-D-GlcNAc-(1-&gt;3)-beta-D-Gal-(1-&gt;4)-beta-D-Glc-(1&lt;-&gt;1')-Cer + GDP + H(+). It catalyses the reaction a neolactoside nLc6Cer + GDP-beta-L-fucose = beta-D-galactosyl-(1-&gt;4)-N-acetyl-beta-D-glucosaminyl-(1-&gt;3)-beta-D-galactosyl-(1-&gt;4)-[alpha-L-fucosyl-(1-&gt;3)]-N-acetyl-beta-D-glucosaminyl-(1-&gt;3)-beta-D-galactosyl-(1-&gt;4)-beta-D-glucosyl-(1&lt;-&gt;1')-ceramide + GDP + H(+). It carries out the reaction a neolactoside VI(3)-alpha-NeuNAc-nLc6Cer + GDP-beta-L-fucose = a neolactoside VI(3)-alpha-NeuAc,V(3)-alphaFuc-nLc6Cer + GDP + H(+). The enzyme catalyses beta-D-galactosyl-(1-&gt;4)-N-acetyl-D-glucosamine + GDP-beta-L-fucose = beta-D-galactosyl-(1-&gt;4)-[alpha-L-fucosyl-(1-&gt;3)]-N-acetyl-D-glucosamine + GDP + H(+). The catalysed reaction is N-acetyl-alpha-neuraminosyl-(2-&gt;3)-beta-D-galactosyl-(1-&gt;4)-N-acetyl-beta-D-glucosamine + GDP-beta-L-fucose = N-acetyl-alpha-neuraminosyl-(2-&gt;3)-beta-D-galactosyl-(1-&gt;4)-[alpha-L-fucosyl-(1-&gt;3)]-N-acetyl-beta-D-glucosamine + GDP + H(+). It catalyses the reaction lactose + GDP-beta-L-fucose = beta-D-galactosyl-(1-&gt;4)-[alpha-L-fucosyl-(1-&gt;3)]-D-glucose + GDP + H(+). It carries out the reaction alpha-L-Fuc-(1-&gt;2)-beta-D-Gal-(1-&gt;4)-D-Glc + GDP-beta-L-fucose = alpha-L-Fuc-(1-&gt;2)-beta-D-Gal-(1-&gt;4)-[alpha-L-Fuc-(1-&gt;3)]-D-Glc + GDP + H(+). The enzyme catalyses a beta-D-galactosyl-(1-&gt;4)-N-acetyl-beta-D-6-sulfooxy-glucosaminyl derivative + GDP-beta-L-fucose = a beta-D-galactosyl-(1-&gt;4)-[alpha-L-fucosyl-(1-&gt;3)]-N-acetyl-beta-D-6-sulfooxy-glucosaminyl derivative + GDP + H(+). Its pathway is protein modification; protein glycosylation. Functionally, catalyzes the transfer of L-fucose, from a guanosine diphosphate-beta-L-fucose, to the N-acetyl glucosamine (GlcNAc) of a distal alpha2,3 sialylated lactosamine unit of a glycoprotein- or a glycolipid-linked sialopolylactosamines chain or of a distal or internal lactosamine unit of a neutral glycoprotein- or a glycolipid-linked polylactosamines chain through an alpha-1,3 glycosidic linkage and participates in surface expression of the sialyl Lewis X (sLe(x)), Lewis X (Le(x)) and non sialylated VIM2 determinants. Moreover transfers fucose to H-type 2 (Fucalpha1-2Galbeta1-4GlcNAc) chain acceptor substrates and participates in difucosylated sialyl Lewis x determinants. Also fucosylates a polylactosamine substrate having a 6 sulfate modification at the GlcNAc moiety and gives rise to sialyl and non-sialyl 6-sulfo lewis X. Does not have activity towards type 1 ((Galbeta1-3GlcNAc)) and H-type 1 chain (Fucalpha1-2Galbeta1-3GlcNAc) acceptors substrates. Does not have alpha(1,3)-fucosyltransferase activity. In Homo sapiens (Human), this protein is 4-galactosyl-N-acetylglucosaminide 3-alpha-L-fucosyltransferase FUT6.